The sequence spans 272 residues: Dickkopf-related protein 1 (272 aa).

A signal peptide spans 1–31; it reads MMVVCAAAAVRFLAVFTMMALCSLPLLGASA. S62 is a glycosylation site (O-linked (GalNAc...) serine). Cystine bridges form between C86-C98, C92-C114, C117-C131, C124-C136, C130-C141, C195-C207, C201-C216, C206-C243, C226-C251, and C245-C269. Residues 86-141 form a DKK-type Cys-1 region; the sequence is CAEDEECGSDEYCSSPSRGAAGVGGVQICLACRKRRKRCMRHAMCCPGNYCKNGIC. Residues 195 to 269 form a DKK-type Cys-2 region; the sequence is CLRSSDCAAG…ASNSSRLHTC (75 aa). The N-linked (GlcNAc...) asparagine glycan is linked to N262.

This sequence belongs to the dickkopf family. In terms of assembly, interacts (via the C-terminal Cys-rich domain) with LRP5 (via beta-propeller regions 3 and 4); the interaction, enhanced by MESD and or KREMEN, antagonizes Wnt-mediated signaling. Interacts with LRP6. Forms a ternary complex with LRP6 and KREM1. Interacts with KREM1.

The protein localises to the secreted. Its function is as follows. Antagonizes canonical Wnt signaling by inhibiting LRP5/6 interaction with Wnt and by forming a ternary complex with the transmembrane protein KREMEN that promotes internalization of LRP5/6. Inhibits the pro-apoptotic function of KREMEN1 in a Wnt-independent manner, and has anti-apoptotic activity. Plays a role in limb development; attenuates Wnt signaling in the developing limb to allow normal limb patterning. The protein is Dickkopf-related protein 1 (Dkk1) of Mus musculus (Mouse).